The following is a 475-amino-acid chain: Methionine aminopeptidase 2-1 (475 aa).

Over residues 1 to 12 (MGSKSPEGHRQT) the composition is skewed to basic and acidic residues. The segment at 1 to 97 (MGSKSPEGHR…LKQSSPPRVL (97 aa)) is disordered. Over residues 44–57 (NLDDDNDDDGEANE) the composition is skewed to acidic residues. Residues 70–83 (KKKKRKRSKKKTKK) show a composition bias toward basic residues. Substrate is bound at residue His211. Asp232, Asp243, and His312 together coordinate a divalent metal cation. His320 contacts substrate. A divalent metal cation contacts are provided by Glu345 and Glu456.

Belongs to the peptidase M24A family. Methionine aminopeptidase eukaryotic type 2 subfamily. Co(2+) is required as a cofactor. It depends on Zn(2+) as a cofactor. Mn(2+) serves as cofactor. Requires Fe(2+) as cofactor.

It localises to the cytoplasm. The enzyme catalyses Release of N-terminal amino acids, preferentially methionine, from peptides and arylamides.. Cotranslationally removes the N-terminal methionine from nascent proteins. The N-terminal methionine is often cleaved when the second residue in the primary sequence is small and uncharged (Met-Ala-, Cys, Gly, Pro, Ser, Thr, or Val). The polypeptide is Methionine aminopeptidase 2-1 (Aspergillus niger (strain ATCC MYA-4892 / CBS 513.88 / FGSC A1513)).